We begin with the raw amino-acid sequence, 137 residues long: Holo-[acyl-carrier-protein] synthase (137 aa).

Positions 8 and 58 each coordinate Mg(2+).

This sequence belongs to the P-Pant transferase superfamily. AcpS family. Mg(2+) serves as cofactor.

The protein resides in the cytoplasm. The enzyme catalyses apo-[ACP] + CoA = holo-[ACP] + adenosine 3',5'-bisphosphate + H(+). In terms of biological role, transfers the 4'-phosphopantetheine moiety from coenzyme A to a Ser of acyl-carrier-protein. This is Holo-[acyl-carrier-protein] synthase from Lactobacillus delbrueckii subsp. bulgaricus (strain ATCC 11842 / DSM 20081 / BCRC 10696 / JCM 1002 / NBRC 13953 / NCIMB 11778 / NCTC 12712 / WDCM 00102 / Lb 14).